The following is a 709-amino-acid chain: Leucine-rich repeat-containing protein 4B (709 aa).

An N-terminal signal peptide occupies residues 1–38; it reads MAQAHIRGSPCPLLPPGRMSWPHGALLLLWLFSPPLRA. In terms of domain architecture, LRRNT spans 50-88; the sequence is GGGSPPATSCPAACSCSNQASRVICTRRELAEVPASIPV. LRR repeat units follow at residues 89–110, 113–134, 137–158, 161–182, 185–207, 210–231, 232–253, 256–277, and 280–301; these read NTRY…TFKH, HLEI…AFNG, SLNT…AFEY, KLRE…AFNR, SLRR…AFEG, NLRY…TALV, RLEE…SFQG, SLRK…AFDD, and SLEE…LFTP. Residue asparagine 226 is glycosylated (N-linked (GlcNAc...) asparagine). Asparagine 285, asparagine 335, asparagine 376, asparagine 402, asparagine 424, asparagine 427, asparagine 446, and asparagine 454 each carry an N-linked (GlcNAc...) asparagine glycan. Positions 313–365 constitute an LRRCT domain; it reads NPWHCNCDVLWLSWWLKETVPSNTTCCARCHAPAGLKGRYIGELDQSHFTCYA. The region spanning 366–454 is the Ig-like C2-type domain; the sequence is PVIVEPPTDL…GNTTASATLN (89 aa). Cysteines 387 and 438 form a disulfide. Residues 496 to 552 form a disordered region; it reads TQPGEEAQQPRGTEKEPPGPTTDGAWGGGRPDAAAPASASTTAPAPRSSRPTEKAFT. Residues 528 to 544 are compositionally biased toward low complexity; sequence AAAPASASTTAPAPRSS. The chain crosses the membrane as a helical span at residues 575–595; sequence IIIGCFVAITFMAAVMLVAFY. Serine 689 is modified (phosphoserine).

As to quaternary structure, interacts with PTPRF. Interacts with DLG4. In terms of processing, N-glycosylated. O-glycosylated; contains sialic acid.

It is found in the membrane. Its subcellular location is the presynaptic cell membrane. Synaptic adhesion protein. Regulates the formation of excitatory synapses. The trans-synaptic adhesion between LRRC4B and PTPRF regulates the formation of excitatory synapses in a bidirectional manner. The protein is Leucine-rich repeat-containing protein 4B (Lrrc4b) of Mus musculus (Mouse).